Reading from the N-terminus, the 944-residue chain is Isoleucine--tRNA ligase (944 aa).

The 'HIGH' region signature appears at P58–H68. E563 is a binding site for L-isoleucyl-5'-AMP. The 'KMSKS' region signature appears at K604–S608. Position 607 (K607) interacts with ATP. Zn(2+) contacts are provided by C907, C910, C927, and C930.

It belongs to the class-I aminoacyl-tRNA synthetase family. IleS type 1 subfamily. In terms of assembly, monomer. Requires Zn(2+) as cofactor.

The protein resides in the cytoplasm. The enzyme catalyses tRNA(Ile) + L-isoleucine + ATP = L-isoleucyl-tRNA(Ile) + AMP + diphosphate. Functionally, catalyzes the attachment of isoleucine to tRNA(Ile). As IleRS can inadvertently accommodate and process structurally similar amino acids such as valine, to avoid such errors it has two additional distinct tRNA(Ile)-dependent editing activities. One activity is designated as 'pretransfer' editing and involves the hydrolysis of activated Val-AMP. The other activity is designated 'posttransfer' editing and involves deacylation of mischarged Val-tRNA(Ile). The polypeptide is Isoleucine--tRNA ligase (Salmonella paratyphi A (strain ATCC 9150 / SARB42)).